The chain runs to 315 residues: MWRGLPALALAALLLLGRAPAGRAAACEPVRIPLCKPLPWNMTKMPNHLHHSTQANAVLAMEQFEGLLGTNCSPDLLFFLCAMYAPICTIDFQHEPIKPCKSVCERARAGCEPVLIRYRHAWPESLACDELPLYDRGVCISPEAIVTAEGADFPMDSNNGNCRGTGIERCKCKPIKATQKTYLRNNYNYVIRAKVKEVKTKCHDVTAVVEVKEILKSSLVNIPKDTVNLYTNSGCLCPPLSANEEYIIMGYEDEERSRLLLVEGSIAEKWKDRLGKKVKRWDQKLRHLGKGKGEPGQSDSALKTGKPGNARQTRS.

The signal sequence occupies residues 1 to 21; it reads MWRGLPALALAALLLLGRAPA. The region spanning 22–142 is the FZ domain; the sequence is GRAAACEPVR…LYDRGVCISP (121 aa). 5 disulfide bridges follow: Cys27–Cys88, Cys35–Cys81, Cys72–Cys111, Cys100–Cys139, and Cys104–Cys128. The N-linked (GlcNAc...) asparagine glycan is linked to Asn41. Residues 170–290 enclose the NTR domain; that stretch reads CKCKPIKATQ…WDQKLRHLGK (121 aa). Residues 284-315 form a disordered region; sequence KLRHLGKGKGEPGQSDSALKTGKPGNARQTRS.

Belongs to the secreted frizzled-related protein (sFRP) family.

It localises to the secreted. Its function is as follows. Soluble frizzled-related proteins (sFRPS) function as modulators of Wnt signaling through direct interaction with Wnts. They have a role in regulating cell growth and differentiation in specific cell types. SFRP3/FRZB appears to be involved in limb skeletogenesis. Antagonist of Wnt8 signaling. Regulates chondrocyte maturation and long bone development. The chain is Secreted frizzled-related protein 3 (FRZB) from Gallus gallus (Chicken).